The chain runs to 234 residues: Proteasome subunit alpha type-2 (234 aa).

At A2 the chain carries N-acetylalanine. At Y121 the chain carries Phosphotyrosine.

The protein belongs to the peptidase T1A family. The 26S proteasome consists of a 20S proteasome core and two 19S regulatory subunits. The 20S proteasome core is a barrel-shaped complex made of 28 subunits that are arranged in four stacked rings. The two outer rings are each formed by seven alpha subunits, and the two inner rings are formed by seven beta subunits. The proteolytic activity is exerted by three beta-subunits PSMB5, PSMB6 and PSMB7.

It localises to the cytoplasm. The protein resides in the nucleus. Functionally, component of the 20S core proteasome complex involved in the proteolytic degradation of most intracellular proteins. This complex plays numerous essential roles within the cell by associating with different regulatory particles. Associated with two 19S regulatory particles, forms the 26S proteasome and thus participates in the ATP-dependent degradation of ubiquitinated proteins. The 26S proteasome plays a key role in the maintenance of protein homeostasis by removing misfolded or damaged proteins that could impair cellular functions, and by removing proteins whose functions are no longer required. Associated with the PA200 or PA28, the 20S proteasome mediates ubiquitin-independent protein degradation. This type of proteolysis is required in several pathways including spermatogenesis (20S-PA200 complex) or generation of a subset of MHC class I-presented antigenic peptides (20S-PA28 complex). This is Proteasome subunit alpha type-2 (psma2) from Xenopus laevis (African clawed frog).